The sequence spans 361 residues: Tryptophan--tRNA ligase, mitochondrial (361 aa).

A mitochondrion-targeting transit peptide spans 1-16; sequence MAKLPKITSLLPHSRV. ATP is bound by residues Gln21 and 27–30; that span reads HIGN. The 'HIGH' region motif lies at 22–30; that stretch reads PTGIPHIGN. Asp165 is a binding site for L-tryptophan. Residues 177–179, 225–229, and Lys228 each bind ATP; these read GKD and KMSKS. The 'KMSKS' region motif lies at 225 to 229; that stretch reads KMSKS.

It belongs to the class-I aminoacyl-tRNA synthetase family. As to quaternary structure, homodimer.

It localises to the mitochondrion matrix. It catalyses the reaction tRNA(Trp) + L-tryptophan + ATP = L-tryptophyl-tRNA(Trp) + AMP + diphosphate + H(+). In Schizosaccharomyces pombe (strain 972 / ATCC 24843) (Fission yeast), this protein is Tryptophan--tRNA ligase, mitochondrial.